Reading from the N-terminus, the 310-residue chain is p-hydroxybenzoic acid efflux pump subunit AaeA (310 aa).

Residues 12 to 32 (AITLVLVILAFIAIFRAWVYY) traverse the membrane as a helical segment.

The protein belongs to the membrane fusion protein (MFP) (TC 8.A.1) family.

Its subcellular location is the cell inner membrane. Functionally, forms an efflux pump with AaeB. This chain is p-hydroxybenzoic acid efflux pump subunit AaeA, found in Citrobacter koseri (strain ATCC BAA-895 / CDC 4225-83 / SGSC4696).